The primary structure comprises 478 residues: GTPase Obg (478 aa).

Residues 2 to 159 (TTFVDRVELH…RDIVLELKTV (158 aa)) form the Obg domain. The disordered stretch occupies residues 61-87 (HHSPHRKATNGQPGAGDNRSGKDGQDL). In terms of domain architecture, OBG-type G spans 160–330 (ADVALVGYPS…LSFALAGIIA (171 aa)). Residues 166–173 (GYPSAGKS), 191–195 (FTTLV), 212–215 (DVPG), 282–285 (NKVD), and 311–313 (SAI) contribute to the GTP site. 2 residues coordinate Mg(2+): Ser173 and Thr193. The region spanning 348–430 (PRAVDDAGFT…ENAVVFDWEP (83 aa)) is the OCT domain. The interval 436-478 (AEMLGRRGEDHRLEEPRPAAQRRRERDAERDDAEKEYDEFDPF) is disordered. Positions 439-468 (LGRRGEDHRLEEPRPAAQRRRERDAERDDA) are enriched in basic and acidic residues. Residues 469–478 (EKEYDEFDPF) show a composition bias toward acidic residues.

The protein belongs to the TRAFAC class OBG-HflX-like GTPase superfamily. OBG GTPase family. In terms of assembly, monomer. It depends on Mg(2+) as a cofactor.

The protein localises to the cytoplasm. Its function is as follows. An essential GTPase which binds GTP, GDP and possibly (p)ppGpp with moderate affinity, with high nucleotide exchange rates and a fairly low GTP hydrolysis rate. Plays a role in control of the cell cycle, stress response, ribosome biogenesis and in those bacteria that undergo differentiation, in morphogenesis control. The chain is GTPase Obg from Streptomyces griseus subsp. griseus (strain JCM 4626 / CBS 651.72 / NBRC 13350 / KCC S-0626 / ISP 5235).